The chain runs to 283 residues: 4-diphosphocytidyl-2-C-methyl-D-erythritol kinase (283 aa).

The active site involves Lys-10. ATP is bound at residue 95–105 (PVAAGLGGGSS). Asp-137 is an active-site residue.

This sequence belongs to the GHMP kinase family. IspE subfamily.

It catalyses the reaction 4-CDP-2-C-methyl-D-erythritol + ATP = 4-CDP-2-C-methyl-D-erythritol 2-phosphate + ADP + H(+). The protein operates within isoprenoid biosynthesis; isopentenyl diphosphate biosynthesis via DXP pathway; isopentenyl diphosphate from 1-deoxy-D-xylulose 5-phosphate: step 3/6. Its function is as follows. Catalyzes the phosphorylation of the position 2 hydroxy group of 4-diphosphocytidyl-2C-methyl-D-erythritol. The protein is 4-diphosphocytidyl-2-C-methyl-D-erythritol kinase of Pediococcus pentosaceus (strain ATCC 25745 / CCUG 21536 / LMG 10740 / 183-1w).